The primary structure comprises 307 residues: Methionyl-tRNA formyltransferase (307 aa).

108 to 111 (SLLP) lines the (6S)-5,6,7,8-tetrahydrofolate pocket.

It belongs to the Fmt family.

It catalyses the reaction L-methionyl-tRNA(fMet) + (6R)-10-formyltetrahydrofolate = N-formyl-L-methionyl-tRNA(fMet) + (6S)-5,6,7,8-tetrahydrofolate + H(+). In terms of biological role, attaches a formyl group to the free amino group of methionyl-tRNA(fMet). The formyl group appears to play a dual role in the initiator identity of N-formylmethionyl-tRNA by promoting its recognition by IF2 and preventing the misappropriation of this tRNA by the elongation apparatus. The protein is Methionyl-tRNA formyltransferase of Xylella fastidiosa (strain M12).